The following is a 225-amino-acid chain: Cardiotrophin-like cytokine factor 1 (225 aa).

An N-terminal signal peptide occupies residues 1 to 27 (MDLRAGDSWGMLACLCTVLWHLPAVPA). N-linked (GlcNAc...) asparagine glycosylation is present at Asn29.

Belongs to the IL-6 superfamily. In terms of assembly, forms a heteromeric complex with cardiotrophin-like cytokine CRLF1/CLF-1; the CRLF1-CLCF1 complex is a ligand for the ciliary neurotrophic factor receptor/CNTFR. The CRLF1-CLCF1 heterodimer binds SORL1 (via N-terminal ectodomain); within this complex, the interaction is mediated predominantly by the CRLF1 moiety. The tripartite signaling complex formed by CRLF1, CLCF1 and CNTFR also binds SORL1.

Its subcellular location is the secreted. Functionally, in complex with CRLF1, forms a heterodimeric neurotropic cytokine that plays a crucial role during neuronal development. Also stimulates B-cells. Binds to and activates the ILST/gp130 receptor. This is Cardiotrophin-like cytokine factor 1 (Clcf1) from Mus musculus (Mouse).